Reading from the N-terminus, the 130-residue chain is Small ribosomal subunit protein uS11 (130 aa).

The protein belongs to the universal ribosomal protein uS11 family. In terms of assembly, part of the 30S ribosomal subunit. Interacts with proteins S7 and S18. Binds to IF-3.

Functionally, located on the platform of the 30S subunit, it bridges several disparate RNA helices of the 16S rRNA. Forms part of the Shine-Dalgarno cleft in the 70S ribosome. The chain is Small ribosomal subunit protein uS11 from Borreliella afzelii (strain PKo) (Borrelia afzelii).